Consider the following 415-residue polypeptide: Histidine--tRNA ligase (415 aa).

Belongs to the class-II aminoacyl-tRNA synthetase family. In terms of assembly, homodimer.

It localises to the cytoplasm. It carries out the reaction tRNA(His) + L-histidine + ATP = L-histidyl-tRNA(His) + AMP + diphosphate + H(+). The polypeptide is Histidine--tRNA ligase (Rickettsia canadensis (strain McKiel)).